The following is a 235-amino-acid chain: Aspartate/glutamate leucyltransferase (235 aa).

Belongs to the R-transferase family. Bpt subfamily.

The protein localises to the cytoplasm. The enzyme catalyses N-terminal L-glutamyl-[protein] + L-leucyl-tRNA(Leu) = N-terminal L-leucyl-L-glutamyl-[protein] + tRNA(Leu) + H(+). It catalyses the reaction N-terminal L-aspartyl-[protein] + L-leucyl-tRNA(Leu) = N-terminal L-leucyl-L-aspartyl-[protein] + tRNA(Leu) + H(+). In terms of biological role, functions in the N-end rule pathway of protein degradation where it conjugates Leu from its aminoacyl-tRNA to the N-termini of proteins containing an N-terminal aspartate or glutamate. The sequence is that of Aspartate/glutamate leucyltransferase from Pseudomonas fluorescens (strain Pf0-1).